We begin with the raw amino-acid sequence, 325 residues long: Centromere protein O (325 aa).

The disordered stretch occupies residues 1-35 (MEEERNSDEKENALCGRSLTAASRDGGGRMPAAPL). Residues 55-112 (LEMLEAQAHELGLKQEEKEQQEKKLDRLKARVQELRARRDELRAKVELQEKRLLDKEG) are a coiled coil.

Belongs to the CENP-O/MCM21 family. As to quaternary structure, component of the CENPA-HI complex, at least composed of CENPH, CENPI, CENPK, CENPL, CENPM, CENPO and CENPP. Component of a discrete complex composed of at least CENPO, CENPP, CENPQ, CENPR and CENPU.

The protein localises to the nucleus. Its subcellular location is the chromosome. It localises to the centromere. Functionally, component of the CENPA-HI complex, a centromeric complex involved in assembly of kinetochore proteins, mitotic progression and chromosome segregation. Involved in kinetochore assembly and required for recovery from spindle damage. The polypeptide is Centromere protein O (CENPO) (Gallus gallus (Chicken)).